Reading from the N-terminus, the 301-residue chain is GTPase Era (301 aa).

In terms of domain architecture, Era-type G spans 7 to 173; the sequence is KSGFVALLGR…LNTINKYLPE (167 aa). Positions 15-22 are G1; that stretch reads GRPNVGKS. Residue 15–22 coordinates GTP; sequence GRPNVGKS. Residues 41-45 are G2; the sequence is QTTRN. Residues 62 to 65 form a G3 region; the sequence is DTPG. GTP contacts are provided by residues 62–66 and 123–126; these read DTPGI and NKVD. The G4 stretch occupies residues 123–126; the sequence is NKVD. The G5 stretch occupies residues 152–154; sequence ISA. The region spanning 204-281 is the KH type-2 domain; that stretch reads TSQEVPHATA…NLRLWVKVQH (78 aa).

Belongs to the TRAFAC class TrmE-Era-EngA-EngB-Septin-like GTPase superfamily. Era GTPase family. In terms of assembly, monomer.

The protein localises to the cytoplasm. It is found in the cell membrane. Functionally, an essential GTPase that binds both GDP and GTP, with rapid nucleotide exchange. Plays a role in 16S rRNA processing and 30S ribosomal subunit biogenesis and possibly also in cell cycle regulation and energy metabolism. The chain is GTPase Era from Lactobacillus helveticus (strain DPC 4571).